Consider the following 443-residue polypeptide: ATP-dependent protease ATPase subunit HslU (443 aa).

Residues I19, 61–66, D256, E321, and R393 each bind ATP; that span reads GVGKTE.

Belongs to the ClpX chaperone family. HslU subfamily. As to quaternary structure, a double ring-shaped homohexamer of HslV is capped on each side by a ring-shaped HslU homohexamer. The assembly of the HslU/HslV complex is dependent on binding of ATP.

Its subcellular location is the cytoplasm. Functionally, ATPase subunit of a proteasome-like degradation complex; this subunit has chaperone activity. The binding of ATP and its subsequent hydrolysis by HslU are essential for unfolding of protein substrates subsequently hydrolyzed by HslV. HslU recognizes the N-terminal part of its protein substrates and unfolds these before they are guided to HslV for hydrolysis. This Ralstonia nicotianae (strain ATCC BAA-1114 / GMI1000) (Ralstonia solanacearum) protein is ATP-dependent protease ATPase subunit HslU.